The primary structure comprises 137 residues: Integration host factor subunit beta (137 aa).

Over residues 75-92 (KRVPHFKAGKELRERVDR) the composition is skewed to basic and acidic residues. The segment at 75 to 137 (KRVPHFKAGK…EGGGLNLARS (63 aa)) is disordered. Over residues 128–137 (EGGGLNLARS) the composition is skewed to gly residues.

It belongs to the bacterial histone-like protein family. In terms of assembly, heterodimer of an alpha and a beta chain.

Its function is as follows. This protein is one of the two subunits of integration host factor, a specific DNA-binding protein that functions in genetic recombination as well as in transcriptional and translational control. The chain is Integration host factor subunit beta from Cupriavidus pinatubonensis (strain JMP 134 / LMG 1197) (Cupriavidus necator (strain JMP 134)).